The sequence spans 350 residues: tRNA uridine(34) hydroxylase (350 aa).

The region spanning 146 to 240 is the Rhodanese domain; that stretch reads DDPDALFIDM…YARKAREQGL (95 aa). C200 (cysteine persulfide intermediate) is an active-site residue.

It belongs to the TrhO family.

It catalyses the reaction uridine(34) in tRNA + AH2 + O2 = 5-hydroxyuridine(34) in tRNA + A + H2O. Functionally, catalyzes oxygen-dependent 5-hydroxyuridine (ho5U) modification at position 34 in tRNAs, the first step in 5-carboxymethoxyuridine (cmo5U) biosynthesis. May be part of an alternate pathway, which is able to bypass cmo5U biogenesis in a subset of tRNAs under aerobic conditions. The chain is tRNA uridine(34) hydroxylase from Escherichia coli (strain K12).